The primary structure comprises 460 residues: ATP synthase subunit beta (460 aa).

Residue 150-157 coordinates ATP; it reads GGAGVGKT.

It belongs to the ATPase alpha/beta chains family. As to quaternary structure, F-type ATPases have 2 components, CF(1) - the catalytic core - and CF(0) - the membrane proton channel. CF(1) has five subunits: alpha(3), beta(3), gamma(1), delta(1), epsilon(1). CF(0) has three main subunits: a(1), b(2) and c(9-12). The alpha and beta chains form an alternating ring which encloses part of the gamma chain. CF(1) is attached to CF(0) by a central stalk formed by the gamma and epsilon chains, while a peripheral stalk is formed by the delta and b chains.

It localises to the cell inner membrane. It carries out the reaction ATP + H2O + 4 H(+)(in) = ADP + phosphate + 5 H(+)(out). Produces ATP from ADP in the presence of a proton gradient across the membrane. The catalytic sites are hosted primarily by the beta subunits. The protein is ATP synthase subunit beta of Yersinia enterocolitica serotype O:8 / biotype 1B (strain NCTC 13174 / 8081).